The primary structure comprises 354 residues: Uroporphyrinogen decarboxylase (354 aa).

Substrate contacts are provided by residues 27–31 (RQAGR), Asp77, Tyr154, Thr209, and His327.

This sequence belongs to the uroporphyrinogen decarboxylase family. In terms of assembly, homodimer.

The protein resides in the cytoplasm. It carries out the reaction uroporphyrinogen III + 4 H(+) = coproporphyrinogen III + 4 CO2. Its pathway is porphyrin-containing compound metabolism; protoporphyrin-IX biosynthesis; coproporphyrinogen-III from 5-aminolevulinate: step 4/4. Its function is as follows. Catalyzes the decarboxylation of four acetate groups of uroporphyrinogen-III to yield coproporphyrinogen-III. The polypeptide is Uroporphyrinogen decarboxylase (Psychromonas ingrahamii (strain DSM 17664 / CCUG 51855 / 37)).